The primary structure comprises 525 residues: ATP synthase subunit alpha (525 aa).

Residue 172 to 179 (GDRQTGKT) coordinates ATP.

It belongs to the ATPase alpha/beta chains family. As to quaternary structure, F-type ATPases have 2 components, CF(1) - the catalytic core - and CF(0) - the membrane proton channel. CF(1) has five subunits: alpha(3), beta(3), gamma(1), delta(1), epsilon(1). CF(0) has three main subunits: a(1), b(2) and c(9-12). The alpha and beta chains form an alternating ring which encloses part of the gamma chain. CF(1) is attached to CF(0) by a central stalk formed by the gamma and epsilon chains, while a peripheral stalk is formed by the delta and b chains.

It localises to the cell inner membrane. It carries out the reaction ATP + H2O + 4 H(+)(in) = ADP + phosphate + 5 H(+)(out). In terms of biological role, produces ATP from ADP in the presence of a proton gradient across the membrane. The alpha chain is a regulatory subunit. In Parabacteroides distasonis (strain ATCC 8503 / DSM 20701 / CIP 104284 / JCM 5825 / NCTC 11152), this protein is ATP synthase subunit alpha.